A 180-amino-acid polypeptide reads, in one-letter code: Hypoxanthine-guanine phosphoribosyltransferase (180 aa).

The diphosphate site is built by lysine 43 and glycine 44. Mg(2+) contacts are provided by glutamate 99 and aspartate 100. Aspartate 103 (proton acceptor) is an active-site residue. GMP-binding positions include lysine 131, 152–153, and aspartate 159; that span reads FV. Diphosphate is bound at residue arginine 165.

It belongs to the purine/pyrimidine phosphoribosyltransferase family. Mg(2+) serves as cofactor.

The protein localises to the cytoplasm. The catalysed reaction is IMP + diphosphate = hypoxanthine + 5-phospho-alpha-D-ribose 1-diphosphate. It catalyses the reaction GMP + diphosphate = guanine + 5-phospho-alpha-D-ribose 1-diphosphate. The protein operates within purine metabolism; IMP biosynthesis via salvage pathway; IMP from hypoxanthine: step 1/1. It functions in the pathway purine metabolism; GMP biosynthesis via salvage pathway; GMP from guanine: step 1/1. Its function is as follows. Purine salvage pathway enzyme that catalyzes the transfer of the ribosyl-5-phosphate group from 5-phospho-alpha-D-ribose 1-diphosphate (PRPP) to the N9 position of the 6-oxopurines hypoxanthine and guanine to form the corresponding ribonucleotides IMP (inosine 5'-monophosphate) and GMP (guanosine 5'-monophosphate), with the release of PPi. This chain is Hypoxanthine-guanine phosphoribosyltransferase (hpt), found in Streptococcus pneumoniae serotype 4 (strain ATCC BAA-334 / TIGR4).